The following is a 125-amino-acid chain: Methylglyoxal synthase (125 aa).

Positions 1-125 (MTQRLRIALI…TAEKLVRALD (125 aa)) constitute an MGS-like domain. Residues H12, K16, 38-41 (TGTT), and 59-60 (SG) contribute to the substrate site. D65 serves as the catalytic Proton donor/acceptor. A substrate-binding site is contributed by H92.

Belongs to the methylglyoxal synthase family.

It carries out the reaction dihydroxyacetone phosphate = methylglyoxal + phosphate. Its function is as follows. Catalyzes the formation of methylglyoxal from dihydroxyacetone phosphate. This is Methylglyoxal synthase from Brucella abortus (strain S19).